The following is a 910-amino-acid chain: Protein translocase subunit SecA (910 aa).

ATP is bound by residues Q89, G107–T111, and D502. Residues C894, C896, C905, and H906 each coordinate Zn(2+).

The protein belongs to the SecA family. Monomer and homodimer. Part of the essential Sec protein translocation apparatus which comprises SecA, SecYEG and auxiliary proteins SecDF-YajC and YidC. Requires Zn(2+) as cofactor.

It localises to the cell inner membrane. Its subcellular location is the cytoplasm. The enzyme catalyses ATP + H2O + cellular proteinSide 1 = ADP + phosphate + cellular proteinSide 2.. In terms of biological role, part of the Sec protein translocase complex. Interacts with the SecYEG preprotein conducting channel. Has a central role in coupling the hydrolysis of ATP to the transfer of proteins into and across the cell membrane, serving both as a receptor for the preprotein-SecB complex and as an ATP-driven molecular motor driving the stepwise translocation of polypeptide chains across the membrane. In Chelativorans sp. (strain BNC1), this protein is Protein translocase subunit SecA.